The sequence spans 545 residues: Aclacinomycin-N/aclacinomycin-A oxidase (545 aa).

The tat-type signal signal peptide spans 1–43 (MFVLNEFTRRGFLGTAAAVGGTTVVTTALGGAPAAQAAVPEAA). The FAD-binding PCMH-type domain maps to 76 to 256 (FRGRPDVVYV…TRYWFRTPGA (181 aa)). Positions 113–173 (HCFEGFVDDP…WGVTIPAGVC (61 aa)) form a cross-link, 6-(S-cysteinyl)-8alpha-(pros-histidyl)-FAD (His-Cys). Tyrosine 421 acts as the Proton acceptor in catalysis. Threonine 451 serves as a coordination point for aclacinomycin Y. Asparagine 492 is a binding site for FAD. Tyrosine 493 serves as the catalytic Proton acceptor. Tyrosine 493 is a binding site for aclacinomycin Y.

Belongs to the oxygen-dependent FAD-linked oxidoreductase family. As to quaternary structure, homotetramer; dimer of dimers. FAD is required as a cofactor. Post-translationally, predicted to be exported by the Tat system. The position of the signal peptide cleavage has been experimentally proven. The FAD cofactor is bound via a bicovalent 6-S-cysteinyl, 8alpha-N1-histidyl FAD linkage.

The catalysed reaction is aclacinomycin N + O2 = aclacinomycin A + H2O2. It carries out the reaction aclacinomycin A + O2 = aclacinomycin Y + H2O2. Its activity is regulated as follows. Inhibited by ascorbic acid and iron ion. Involved in the modification of the terminal sugar residues in the last two steps in the biosynthesis of polyketide antibiotics of the aclacinomycin group. In the first reaction, it catalyzes the oxidation of the hydroxyl group at carbon C4 of the L-rhodinose terminal sugar moiety of aclacinomycin N (AclN) to a keto group, modifying the sugar to cinerulose A and generating aclacinomycin A (AclA). In the second reaction, it catalyzes the elimination of two hydrogen atoms from cinerulose A, leading to a double bond between carbon atoms C2 and C3 and the generation of the L-aculose terminal sugar moiety of aclacinomycin Y (AclY). It can also use aclacinomycin analogs, epsilon-pyrromycinone glycosides, rhodirubins (A, B, C and E) and all triglycosides containing L-cinerulose, L-rhodinose or 2-deoxy-L-fucose as terminal sugar. This chain is Aclacinomycin-N/aclacinomycin-A oxidase, found in Streptomyces galilaeus.